Reading from the N-terminus, the 321-residue chain is Malate dehydrogenase (321 aa).

Residues 10–15 and aspartate 34 contribute to the NAD(+) site; that span reads GSGMIG. 2 residues coordinate substrate: arginine 83 and arginine 89. NAD(+)-binding positions include asparagine 96 and 119-121; that span reads ITN. The substrate site is built by asparagine 121 and arginine 152. The active-site Proton acceptor is histidine 176.

It belongs to the LDH/MDH superfamily. MDH type 3 family.

It catalyses the reaction (S)-malate + NAD(+) = oxaloacetate + NADH + H(+). Its function is as follows. Catalyzes the reversible oxidation of malate to oxaloacetate. This is Malate dehydrogenase from Chelativorans sp. (strain BNC1).